A 211-amino-acid polypeptide reads, in one-letter code: Pyridoxine/pyridoxamine 5'-phosphate oxidase (211 aa).

Substrate contacts are provided by residues 7-10 and lysine 65; that span reads RTDY. FMN-binding positions include 60-65, 75-76, arginine 81, and lysine 82; these read RILLIK and FT. Substrate is bound by residues tyrosine 122, arginine 126, and serine 130. Residues 139-140 and tryptophan 183 each bind FMN; that span reads QS. 189–191 provides a ligand contact to substrate; the sequence is RLH. Residue arginine 193 coordinates FMN.

The protein belongs to the pyridoxamine 5'-phosphate oxidase family. Homodimer. The cofactor is FMN.

It carries out the reaction pyridoxamine 5'-phosphate + O2 + H2O = pyridoxal 5'-phosphate + H2O2 + NH4(+). The catalysed reaction is pyridoxine 5'-phosphate + O2 = pyridoxal 5'-phosphate + H2O2. It participates in cofactor metabolism; pyridoxal 5'-phosphate salvage; pyridoxal 5'-phosphate from pyridoxamine 5'-phosphate: step 1/1. It functions in the pathway cofactor metabolism; pyridoxal 5'-phosphate salvage; pyridoxal 5'-phosphate from pyridoxine 5'-phosphate: step 1/1. Catalyzes the oxidation of either pyridoxine 5'-phosphate (PNP) or pyridoxamine 5'-phosphate (PMP) into pyridoxal 5'-phosphate (PLP). This chain is Pyridoxine/pyridoxamine 5'-phosphate oxidase, found in Janthinobacterium sp. (strain Marseille) (Minibacterium massiliensis).